A 572-amino-acid polypeptide reads, in one-letter code: NADH-ubiquinone oxidoreductase chain 5 (572 aa).

Helical transmembrane passes span 6–26 (FFFLFLFSTLFFILGIYYLMI), 44–64 (VVMTFIIDWMSLVFMSFVMYI), 86–106 (IMIVLMFILSMAFLIISPNLI), 107–127 (SILLGWDGLGLVSYCLVIYYQ), 147–167 (VAILISISWMLNFGSWNYIYY), 179–201 (IITLLIILAAMTKSAQIPFSSWL), 208–230 (PTPVSALVHSSTLVTAGVYLLIR), 234–254 (MLMVYDFGWYILFIGCLTMFM), 268–288 (IIALSTLSQLGLMMSILSMGY), 291–311 (LAFFHLLTHALFKALLFMCAG), 337–357 (SICFNVSSLCLCGMPFLAGFY), 372–394 (NFFIFFLYFFSTGLTASYSFRLF), 422–442 (IGLLIVAVFGGSLLSWLIFPV), 454–474 (FLTLLTIILGSYFGYVISDFV), 479–499 (LFSLNFLSFVMFTGSMWFMPF), 524–544 (WGELLGGQGLYSFFVYLINYI), and 552–572 (FKVYLLTFVFWMFILFVLFFL).

This sequence belongs to the complex I subunit 5 family.

The protein resides in the mitochondrion inner membrane. It catalyses the reaction a ubiquinone + NADH + 5 H(+)(in) = a ubiquinol + NAD(+) + 4 H(+)(out). Functionally, core subunit of the mitochondrial membrane respiratory chain NADH dehydrogenase (Complex I) that is believed to belong to the minimal assembly required for catalysis. Complex I functions in the transfer of electrons from NADH to the respiratory chain. The immediate electron acceptor for the enzyme is believed to be ubiquinone. This is NADH-ubiquinone oxidoreductase chain 5 (ND5) from Locusta migratoria (Migratory locust).